Consider the following 160-residue polypeptide: Large ribosomal subunit protein uL10 (160 aa).

It belongs to the universal ribosomal protein uL10 family. As to quaternary structure, part of the ribosomal stalk of the 50S ribosomal subunit. The N-terminus interacts with L11 and the large rRNA to form the base of the stalk. The C-terminus forms an elongated spine to which L12 dimers bind in a sequential fashion forming a multimeric L10(L12)X complex.

Forms part of the ribosomal stalk, playing a central role in the interaction of the ribosome with GTP-bound translation factors. The polypeptide is Large ribosomal subunit protein uL10 (Wolinella succinogenes (strain ATCC 29543 / DSM 1740 / CCUG 13145 / JCM 31913 / LMG 7466 / NCTC 11488 / FDC 602W) (Vibrio succinogenes)).